Here is a 349-residue protein sequence, read N- to C-terminus: Ion-translocating oxidoreductase complex subunit D (349 aa).

The next 3 helical transmembrane spans lie at V20–G42, S77–V99, and A124–A144. T185 carries the FMN phosphoryl threonine modification. Helical transmembrane passes span S212–L232, W239–L259, A265–T285, A291–I311, and G315–I335.

This sequence belongs to the NqrB/RnfD family. In terms of assembly, the complex is composed of six subunits: RnfA, RnfB, RnfC, RnfD, RnfE and RnfG. FMN is required as a cofactor.

Its subcellular location is the cell inner membrane. Functionally, part of a membrane-bound complex that couples electron transfer with translocation of ions across the membrane. The sequence is that of Ion-translocating oxidoreductase complex subunit D from Shewanella baltica (strain OS195).